A 343-amino-acid polypeptide reads, in one-letter code: TATA box-binding protein-like 2 (343 aa).

Positions 71-152 (PDEVTQENKD…SDSLSLASIT (82 aa)) are disordered. The span at 76-90 (QENKDQPVISKHETE) shows a compositional bias: basic and acidic residues. Residues 94–127 (ESQSPQSRLPSPSEQDVGLGLNSSSLSNSHSQLH) are compositionally biased toward low complexity. Over residues 143 to 152 (SDSLSLASIT) the composition is skewed to polar residues.

Belongs to the TBP family. Interacts with TAF3. As to expression, ubiquitously expressed in all tissues examined with highest levels in heart, lung, ovary, spleen and testes.

It is found in the cytoplasm. It localises to the nucleus. Transcription factor required in complex with TAF3 for the differentiation of myoblasts into myocytes. The complex replaces TFIID at specific promoters at an early stage in the differentiation process. The polypeptide is TATA box-binding protein-like 2 (Homo sapiens (Human)).